The chain runs to 541 residues: EH domain-containing protein 4 (541 aa).

M1 bears the N-acetylmethionine mark. The segment at 1-20 (MFSWMGRQAGGRERSGGMDA) is disordered. S15 bears the Phosphoserine mark. Residues 58 to 289 (FENKPMILLV…DLFRDIQSLP (232 aa)) enclose the Dynamin-type G domain. The segment at 68-75 (GQYSTGKT) is G1 motif. 68-75 (GQYSTGKT) is a binding site for ATP. Residues 94-95 (EP) are G2 motif. The interval 156–159 (DSPG) is G3 motif. A Phosphoserine modification is found at S162. A G4 motif region spans residues 222 to 225 (NKAD). K223 contributes to the ATP binding site. Position 246 (V246) is a region of interest, G5 motif. W261 provides a ligand contact to ATP. The 89-residue stretch at 447 to 535 (DKPVYDELFY…PHLVPPSHRK (89 aa)) folds into the EH domain. Y451 is subject to Phosphotyrosine. At S459 the chain carries Phosphoserine. Residues 479-514 (LPNSVLGKIWKLADCDCDGMLDEEEFALAKHLIKIK) form the EF-hand domain. Residues D492, D494, D496, M498, and E503 each coordinate Ca(2+).

It belongs to the TRAFAC class dynamin-like GTPase superfamily. Dynamin/Fzo/YdjA family. EHD subfamily. As to quaternary structure, homooligomer, and heterooligomer with EHD1, EHD2 and EHD3. Forms a complex with EHD4 and MICALL1; the complex controls CDH5 trafficking and coordinates angiogenesis.

It localises to the early endosome membrane. The protein localises to the recycling endosome membrane. The protein resides in the cell membrane. Its subcellular location is the cell junction. It is found in the adherens junction. In terms of biological role, ATP- and membrane-binding protein that probably controls membrane reorganization/tubulation upon ATP hydrolysis. Plays a role in early endosomal transport. During sprouting angiogenesis, in complex with PACSIN2 and MICALL1, forms recycling endosome-like tubular structure at asymmetric adherens junctions to control CDH5 trafficking. The polypeptide is EH domain-containing protein 4 (Mus musculus (Mouse)).